The following is a 228-amino-acid chain: Carboxylesterase SOBER1 (228 aa).

Catalysis depends on charge relay system residues Ser-106, Asp-160, and His-192.

It belongs to the AB hydrolase superfamily. AB hydrolase 2 family.

In terms of biological role, possesses carboxylesterase activity in vitro with a preference for short acyl chain substrates. Functions as a negative regulator of the hypersensitive response (HR) triggered by the bacterial type III effector protein AvrBsT. Possesses phospholipase A2 (PLA2) activity and hydrolyzes phosphatidylcholine (PC), a lipid that is hydrolyzed by phospholipase D (PLD) to produce phosphatidic acid (PA). Required to suppress AvrBsT-dependent HR and PLD-dependent production of PA in response to AvrBsT elicitation. In Arabidopsis thaliana (Mouse-ear cress), this protein is Carboxylesterase SOBER1.